Reading from the N-terminus, the 296-residue chain is Probable 2-(5''-triphosphoribosyl)-3'-dephosphocoenzyme-A synthase (296 aa).

It belongs to the CitG/MdcB family.

The enzyme catalyses 3'-dephospho-CoA + ATP = 2'-(5''-triphospho-alpha-D-ribosyl)-3'-dephospho-CoA + adenine. This is Probable 2-(5''-triphosphoribosyl)-3'-dephosphocoenzyme-A synthase from Streptococcus mutans serotype c (strain ATCC 700610 / UA159).